The sequence spans 283 residues: Thymidylate synthase (283 aa).

Residue Arg22 coordinates dUMP. Cys160 functions as the Nucleophile in the catalytic mechanism. DUMP contacts are provided by residues 180–183, Asn191, and 221–223; these read RSCD and HIY. Asp183 lines the (6R)-5,10-methylene-5,6,7,8-tetrahydrofolate pocket. Ser282 contacts (6R)-5,10-methylene-5,6,7,8-tetrahydrofolate.

The protein belongs to the thymidylate synthase family. Bacterial-type ThyA subfamily. Homodimer.

The protein localises to the cytoplasm. The catalysed reaction is dUMP + (6R)-5,10-methylene-5,6,7,8-tetrahydrofolate = 7,8-dihydrofolate + dTMP. The protein operates within pyrimidine metabolism; dTTP biosynthesis. Its function is as follows. Catalyzes the reductive methylation of 2'-deoxyuridine-5'-monophosphate (dUMP) to 2'-deoxythymidine-5'-monophosphate (dTMP) while utilizing 5,10-methylenetetrahydrofolate (mTHF) as the methyl donor and reductant in the reaction, yielding dihydrofolate (DHF) as a by-product. This enzymatic reaction provides an intracellular de novo source of dTMP, an essential precursor for DNA biosynthesis. The chain is Thymidylate synthase from Haemophilus influenzae (strain ATCC 51907 / DSM 11121 / KW20 / Rd).